The chain runs to 392 residues: ESX-1 secretion-associated protein EspA (392 aa).

A disordered region spans residues 302 to 392; sequence TRQALRPRAD…GQKVLVRNVV (91 aa). Residues 334-344 show a composition bias toward gly residues; that stretch reads QGMGGPVGMGG.

As to quaternary structure, homodimer; disulfide-linked. An artificial EsxB-EsxA heterodimer interacts with EspA.

It localises to the secreted. Required for secretion of EsxA (ESAT-6) and EsxB (CFP-10) and for virulence. Involved in translocation of bacteria from the host (human) phagolysosome to the host cytoplasm. In Mycobacterium tuberculosis (strain ATCC 25618 / H37Rv), this protein is ESX-1 secretion-associated protein EspA.